We begin with the raw amino-acid sequence, 148 residues long: Large ribosomal subunit protein bL9 (148 aa).

The protein belongs to the bacterial ribosomal protein bL9 family.

Functionally, binds to the 23S rRNA. This chain is Large ribosomal subunit protein bL9, found in Salinispora arenicola (strain CNS-205).